The chain runs to 828 residues: Periplasmic nitrate reductase (828 aa).

Positions M1–A31 form a signal peptide, tat-type signal. In terms of domain architecture, 4Fe-4S Mo/W bis-MGD-type spans I39–D95. The [4Fe-4S] cluster site is built by C46, C49, C53, and C81. Mo-bis(molybdopterin guanine dinucleotide) contacts are provided by residues K83, Q150, N175, C179, W212–M219, S243–H247, Q262–D264, M372, Q376, N482, S508–D509, K531, D558, and T718–T727. Residue F794 coordinates substrate. Mo-bis(molybdopterin guanine dinucleotide)-binding residues include N802 and K819.

This sequence belongs to the prokaryotic molybdopterin-containing oxidoreductase family. NasA/NapA/NarB subfamily. As to quaternary structure, component of the periplasmic nitrate reductase NapAB complex composed of NapA and NapB. [4Fe-4S] cluster is required as a cofactor. It depends on Mo-bis(molybdopterin guanine dinucleotide) as a cofactor. In terms of processing, predicted to be exported by the Tat system. The position of the signal peptide cleavage has not been experimentally proven.

Its subcellular location is the periplasm. The catalysed reaction is 2 Fe(II)-[cytochrome] + nitrate + 2 H(+) = 2 Fe(III)-[cytochrome] + nitrite + H2O. Functionally, catalytic subunit of the periplasmic nitrate reductase complex NapAB. Receives electrons from NapB and catalyzes the reduction of nitrate to nitrite. The sequence is that of Periplasmic nitrate reductase from Escherichia coli O7:K1 (strain IAI39 / ExPEC).